Reading from the N-terminus, the 1358-residue chain is DNA-directed RNA polymerase subunit beta (1358 aa).

Residues 1033 to 1051 (QGLEDRKKEHEARFDDKKG) show a composition bias toward basic and acidic residues. A disordered region spans residues 1033 to 1053 (QGLEDRKKEHEARFDDKKGKL).

The protein belongs to the RNA polymerase beta chain family. As to quaternary structure, the RNAP catalytic core consists of 2 alpha, 1 beta, 1 beta' and 1 omega subunit. When a sigma factor is associated with the core the holoenzyme is formed, which can initiate transcription.

It carries out the reaction RNA(n) + a ribonucleoside 5'-triphosphate = RNA(n+1) + diphosphate. In terms of biological role, DNA-dependent RNA polymerase catalyzes the transcription of DNA into RNA using the four ribonucleoside triphosphates as substrates. The protein is DNA-directed RNA polymerase subunit beta of Marinobacter nauticus (strain ATCC 700491 / DSM 11845 / VT8) (Marinobacter aquaeolei).